The chain runs to 155 residues: 6,7-dimethyl-8-ribityllumazine synthase (155 aa).

Residues W24, 58 to 60 (AFE), and 82 to 84 (AVI) each bind 5-amino-6-(D-ribitylamino)uracil. 87 to 88 (GT) is a binding site for (2S)-2-hydroxy-3-oxobutyl phosphate. The active-site Proton donor is the H90. F115 contributes to the 5-amino-6-(D-ribitylamino)uracil binding site. R129 contacts (2S)-2-hydroxy-3-oxobutyl phosphate.

It belongs to the DMRL synthase family. As to quaternary structure, forms an icosahedral capsid composed of 60 subunits, arranged as a dodecamer of pentamers.

The catalysed reaction is (2S)-2-hydroxy-3-oxobutyl phosphate + 5-amino-6-(D-ribitylamino)uracil = 6,7-dimethyl-8-(1-D-ribityl)lumazine + phosphate + 2 H2O + H(+). It functions in the pathway cofactor biosynthesis; riboflavin biosynthesis; riboflavin from 2-hydroxy-3-oxobutyl phosphate and 5-amino-6-(D-ribitylamino)uracil: step 1/2. In terms of biological role, catalyzes the formation of 6,7-dimethyl-8-ribityllumazine by condensation of 5-amino-6-(D-ribitylamino)uracil with 3,4-dihydroxy-2-butanone 4-phosphate. This is the penultimate step in the biosynthesis of riboflavin. This chain is 6,7-dimethyl-8-ribityllumazine synthase, found in Saccharophagus degradans (strain 2-40 / ATCC 43961 / DSM 17024).